A 318-amino-acid chain; its full sequence is Thymidylate synthase (318 aa).

DUMP contacts are provided by residues R25 and 180–181 (RR). The active-site Nucleophile is C200. DUMP-binding positions include 220-223 (RSGD), N231, and 261-263 (HIY). D223 contacts (6R)-5,10-methylene-5,6,7,8-tetrahydrofolate. A317 contributes to the (6R)-5,10-methylene-5,6,7,8-tetrahydrofolate binding site.

It belongs to the thymidylate synthase family. Bacterial-type ThyA subfamily. Homodimer.

Its subcellular location is the cytoplasm. It carries out the reaction dUMP + (6R)-5,10-methylene-5,6,7,8-tetrahydrofolate = 7,8-dihydrofolate + dTMP. It functions in the pathway pyrimidine metabolism; dTTP biosynthesis. Its function is as follows. Catalyzes the reductive methylation of 2'-deoxyuridine-5'-monophosphate (dUMP) to 2'-deoxythymidine-5'-monophosphate (dTMP) while utilizing 5,10-methylenetetrahydrofolate (mTHF) as the methyl donor and reductant in the reaction, yielding dihydrofolate (DHF) as a by-product. This enzymatic reaction provides an intracellular de novo source of dTMP, an essential precursor for DNA biosynthesis. The polypeptide is Thymidylate synthase (Bacillus cereus (strain ZK / E33L)).